Here is a 100-residue protein sequence, read N- to C-terminus: Competence protein ComGE (100 aa).

Residues 15-35 (VILLEAVVALAIFASIATLLL) traverse the membrane as a helical segment.

As to quaternary structure, the transformation pili are flexible filaments, consisting mainly of the major pilin ComGC and smaller amounts of the minor pilins, including at least ComGD, ComGF and ComGG, and perhaps ComGE. Interacts with ComGD. Interacts with ComGF. Interacts with ComGG.

The protein localises to the cell membrane. The protein resides in the cell surface. Its function is as follows. Required for formation of the type IV-like pilus (T4P) that plays a role in transformation. Transformation pili are dynamically extended and retracted, perhaps thereby promoting DNA uptake and transformation. Involved in transformation. Required for DNA binding. The chain is Competence protein ComGE from Streptococcus pneumoniae (strain ATCC BAA-255 / R6).